Here is a 976-residue protein sequence, read N- to C-terminus: MQDLPAGQAQQPFLTRSFFFFQYHFRESDDANASNRSPVSNPYEPDYDQLSPPPMLGAQRPVPEQNESSRDLLHSSYHGSIGQASYDQGSFNGHNSTYGVGGFGHYPPDLHGRLPGSPGYEYPEPEYDVEASRLAESRLSVMHRTPTMQEWSPNGETLSVSPDFAHGRPDSTYQEFDVDESWMMRQQQAQIGGGGLGRSKTRKVKLVQGSVLSIDYPVPSAVKNAIEPRYRNGPGSMEEEFTKMRYTAATCDPNDFTLRNGFNLRPRMYNRHTELLIAITYYNEDKVLLARTLHYTMKNIQDIVNLKRSKFWNKGGPAWQKIVVCLVFDGLDKVDKNVFDVLATVGVYQDGVLKKDVNGKETVAHIFEYTSQISVTPDQQLVRPDPDKPHRNLPPVQFIFCLKQKNSKKINSHRWLFNAFGRILNPEVAILIDAGTKPGPRALLSLWEGFYNDRDLGGACGEIHVMLGKGGKMLLNPLVAVQNFEYKISNVLDKPLESAFGYVSVLPGAFSAYRFRAIMGRPLEQYFHGDHTLSKTLGKKGIDGMNIFKKNMFLAEDRILCFELVAKASQKWHLSYIKASKGETDVPEGASEFIGQRRRWLNGSFAMSLYSLMHFGRMYGSGHNVVRLFFLHIQFVYNLLNVLFSWFSLAAFYLTTTIIMKLVGTPQVLSGYHGWPFGDMASPIVNVLIKYIYIAFLVLQFVLALGNRPKGAQYTYVLSFMVFGLIQLYLLVLTGYLVYRAFTGTPIEDQISFASGQAFFDSFFGGNTGVAGLIIIALITIYGLNYIASFLYLDPWHMFHSFPQYLVLMSTYINILMVYAFNNWHDVSWGTKGSDAAEALPSANIVKDEKGKEAVVEEIEQEQEDIDSKFEKVVWRALAPMSEMMEEKPEAKDVEDSYKSFRTGLVILWLLCNIVLITFVTTDDFSSLGVSKASDVRTPMYFRFLLYSTGVLSIVRFIGFLWFIGRTGIMCCIARR.

The segment at 29–72 (DDANASNRSPVSNPYEPDYDQLSPPPMLGAQRPVPEQNESSRDL) is disordered. Residues 31-40 (ANASNRSPVS) show a composition bias toward polar residues. 4 N-linked (GlcNAc...) asparagine glycosylation sites follow: Asn32, Asn66, Asn95, and Asn602. The next 7 membrane-spanning stretches (helical) occupy residues 639 to 659 (LLNV…TTII), 684 to 704 (IVNV…FVLA), 717 to 737 (VLSF…TGYL), 773 to 793 (LIII…FLYL), 801 to 821 (SFPQ…VYAF), 903 to 923 (TGLV…VTTD), and 944 to 964 (FLLY…LWFI).

The protein belongs to the chitin synthase family. Class III subfamily.

It localises to the cell membrane. It carries out the reaction [(1-&gt;4)-N-acetyl-beta-D-glucosaminyl](n) + UDP-N-acetyl-alpha-D-glucosamine = [(1-&gt;4)-N-acetyl-beta-D-glucosaminyl](n+1) + UDP + H(+). Polymerizes chitin, a structural polymer of the cell wall and septum, by transferring the sugar moiety of UDP-GlcNAc to the non-reducing end of the growing chitin polymer. Shows additive effects in septum formation with CHS1, CHS2, CHS4, CHS5, CHS6 and CHS7. Involved in virulence and mediates mycotoxin deoxinivalenol (DON) biosynthesis via the regulation of the expression of TRI4, TRI5 and TRI6. The sequence is that of Chitin synthase 3A from Gibberella zeae (strain ATCC MYA-4620 / CBS 123657 / FGSC 9075 / NRRL 31084 / PH-1) (Wheat head blight fungus).